A 321-amino-acid polypeptide reads, in one-letter code: Anthranilate phosphoribosyltransferase (321 aa).

Residues glycine 72, 75–76 (GD), threonine 80, 82–85 (NVST), 99–107 (KHGNVSITS), and serine 111 contribute to the 5-phospho-alpha-D-ribose 1-diphosphate site. Glycine 72 is a binding site for anthranilate. Serine 84 lines the Mg(2+) pocket. An anthranilate-binding site is contributed by asparagine 102. Position 157 (arginine 157) interacts with anthranilate. Aspartate 216 and glutamate 217 together coordinate Mg(2+).

It belongs to the anthranilate phosphoribosyltransferase family. As to quaternary structure, homodimer. Mg(2+) serves as cofactor.

The enzyme catalyses N-(5-phospho-beta-D-ribosyl)anthranilate + diphosphate = 5-phospho-alpha-D-ribose 1-diphosphate + anthranilate. The protein operates within amino-acid biosynthesis; L-tryptophan biosynthesis; L-tryptophan from chorismate: step 2/5. Its function is as follows. Catalyzes the transfer of the phosphoribosyl group of 5-phosphorylribose-1-pyrophosphate (PRPP) to anthranilate to yield N-(5'-phosphoribosyl)-anthranilate (PRA). This is Anthranilate phosphoribosyltransferase from Methanococcus maripaludis (strain DSM 14266 / JCM 13030 / NBRC 101832 / S2 / LL).